A 361-amino-acid polypeptide reads, in one-letter code: MSQNSLRLVEDNSVDKTKALDAALSQIERAFGKGSIMRLGQNDQVVEIETVSTGSLSLDIALGVGGLPKGRIVEIYGPESSGKTTLALHTIAEAQKKGGICAFVDAEHALDPVYARKLGVDLENLLISQPDTGEQALEITDTLVRSGAIDVLVVDSVAALTPRAEIEGEMGDSLPGLQARLMSQALRKLTGSISRSNCMVIFINQIRMKIGVMFGSPETTTGGNALKFYASVRLDIRRIGSIKERDEVVGNQTRVKVVKNKLAPPFKQVEFDIMYGAGVSKVGELVDLGVKAGVVEKSGAWFSYNSQRLGQGRENAKQYLKDNPEVAREIETTLRQNAGLIAEQFLDDGGPEEDAAGAAEM.

ATP is bound at residue 77 to 84 (GPESSGKT).

It belongs to the RecA family.

Its subcellular location is the cytoplasm. Functionally, can catalyze the hydrolysis of ATP in the presence of single-stranded DNA, the ATP-dependent uptake of single-stranded DNA by duplex DNA, and the ATP-dependent hybridization of homologous single-stranded DNAs. It interacts with LexA causing its activation and leading to its autocatalytic cleavage. The chain is Protein RecA from Brucella abortus (strain S19).